Consider the following 191-residue polypeptide: Peptidyl-tRNA hydrolase (191 aa).

A tRNA-binding site is contributed by Tyr-17. The active-site Proton acceptor is the His-22. Tyr-68, Asn-70, and Asn-116 together coordinate tRNA.

Belongs to the PTH family. As to quaternary structure, monomer.

Its subcellular location is the cytoplasm. The enzyme catalyses an N-acyl-L-alpha-aminoacyl-tRNA + H2O = an N-acyl-L-amino acid + a tRNA + H(+). Functionally, hydrolyzes ribosome-free peptidyl-tRNAs (with 1 or more amino acids incorporated), which drop off the ribosome during protein synthesis, or as a result of ribosome stalling. Catalyzes the release of premature peptidyl moieties from peptidyl-tRNA molecules trapped in stalled 50S ribosomal subunits, and thus maintains levels of free tRNAs and 50S ribosomes. In Francisella tularensis subsp. mediasiatica (strain FSC147), this protein is Peptidyl-tRNA hydrolase.